A 388-amino-acid polypeptide reads, in one-letter code: Translation initiation factor eIF2B subunit beta (388 aa).

The disordered stretch occupies residues 109 to 133 (DDFETTTSNNNNNNNNNNINSSSNI). A compositionally biased stretch (low complexity) spans 116 to 133 (SNNNNNNNNNNINSSSNI).

It belongs to the eIF-2B alpha/beta/delta subunits family. In terms of assembly, component of the translation initiation factor 2B (eIF2B) complex which is a heterodecamer of two sets of five different subunits: alpha, beta, gamma, delta and epsilon. Subunits alpha, beta and delta comprise a regulatory subcomplex and subunits epsilon and gamma comprise a catalytic subcomplex. Within the complex, the hexameric regulatory complex resides at the center, with the two heterodimeric catalytic subcomplexes bound on opposite sides.

Its subcellular location is the cytoplasm. It localises to the cytosol. Functionally, acts as a component of the translation initiation factor 2B (eIF2B) complex, which catalyzes the exchange of GDP for GTP on eukaryotic initiation factor 2 (eIF2) gamma subunit. Its guanine nucleotide exchange factor activity is repressed when bound to eIF2 complex phosphorylated on the alpha subunit, thereby limiting the amount of methionyl-initiator methionine tRNA available to the ribosome and consequently global translation is repressed. The chain is Translation initiation factor eIF2B subunit beta (eif2b2) from Dictyostelium discoideum (Social amoeba).